Here is a 234-residue protein sequence, read N- to C-terminus: Large ribosomal subunit protein uL1 (234 aa).

This sequence belongs to the universal ribosomal protein uL1 family. As to quaternary structure, part of the 50S ribosomal subunit.

Functionally, binds directly to 23S rRNA. The L1 stalk is quite mobile in the ribosome, and is involved in E site tRNA release. Its function is as follows. Protein L1 is also a translational repressor protein, it controls the translation of the L11 operon by binding to its mRNA. This is Large ribosomal subunit protein uL1 from Anaeromyxobacter dehalogenans (strain 2CP-1 / ATCC BAA-258).